A 290-amino-acid chain; its full sequence is Potassium-transporting ATPase subunit beta (290 aa).

The Cytoplasmic portion of the chain corresponds to 1 to 36; the sequence is MAALQEKKSCSQRMEEFQRYCWNPDTGQMLGRTLSR. The helical; Signal-anchor for type II membrane protein transmembrane segment at 37-57 threads the bilayer; sequence WVWISLYYVAFYVVMTGIFAL. Residues 58 to 290 are Extracellular-facing; it reads CIYTLMCTLD…KVEFKLTIQQ (233 aa). Asn99, Asn103, Asn130, Asn146, and Asn161 each carry an N-linked (GlcNAc...) asparagine glycan. An intrachain disulfide couples Cys131 to Cys152. Cys162 and Cys178 form a disulfide bridge. Asn193 and Asn221 each carry an N-linked (GlcNAc...) asparagine glycan. Residues 194–290 form an immunoglobulin-like region; it reads STAPRADCTF…KVEFKLTIQQ (97 aa). Cys201 and Cys262 are oxidised to a cystine.

The protein belongs to the X(+)/potassium ATPases subunit beta family. As to quaternary structure, the ATPase pump is composed of two subunits: alpha (catalytic) and beta (regulatory). Interacts with alpha subunit ATP12A; this interaction is required for the formation of a functionally active pump and targeting at the plasma membrane. Interacts (via N-terminus) with alpha subunit ATP4A (via the P-domain). In terms of processing, N-glycosylation is necessary for assembly and functional expression of the pump at the plasma membrane.

The protein resides in the apical cell membrane. It is found in the cell membrane. Functionally, the beta subunit of the gastric H(+)/K(+) ATPase pump which transports H(+) ions in exchange for K(+) ions across the apical membrane of parietal cells. Plays a structural and regulatory role in the assembly and membrane targeting of a functionally active pump. Within a transport cycle, the transfer of a H(+) ion across the membrane is coupled to ATP hydrolysis and is associated with a transient phosphorylation of the alpha subunit that shifts the pump conformation from inward-facing (E1) to outward-facing state (E2). Interacts with the phosphorylation domain of the alpha subunit and functions as a ratchet, stabilizing the lumenal-open E2 conformation and preventing the reverse reaction of the transport cycle. This Canis lupus familiaris (Dog) protein is Potassium-transporting ATPase subunit beta (ATP4B).